Consider the following 443-residue polypeptide: BBSome complex member BBS5 homolog (443 aa).

This sequence belongs to the BBS5 family.

The protein resides in the cytoplasm. It is found in the cytoskeleton. Its subcellular location is the flagellum axoneme. This Giardia intestinalis (strain ATCC 50803 / WB clone C6) (Giardia lamblia) protein is BBSome complex member BBS5 homolog.